A 180-amino-acid polypeptide reads, in one-letter code: Anaerobic nitrite reductase GLB0 (180 aa).

Residues 23 to 172 (TYSKENEQLV…LAEQVKAEMH (150 aa)) form the Globin domain. Positions 56 to 60 (EIAPG) match the Homodimerization motif. 6 residues coordinate heme b: Ser66, Lys80, His84, Lys114, Thr118, and His119. The Homodimerization signature appears at 126–138 (DDQFEIVKEAILY).

It belongs to the plant globin family. In terms of assembly, homodimer. Heme b is required as a cofactor.

The protein localises to the cytoplasm. Its subcellular location is the nucleus. The catalysed reaction is Fe(III)-heme b-[protein] + nitric oxide + H2O = Fe(II)-heme b-[protein] + nitrite + 2 H(+). Functionally, phytoglobin that reduces nitrite to nitric oxide (NO) under anoxic conditions (e.g. during flooding or in waterlogged soil). May not function as an oxygen storage or transport protein. Has an unusually high affinity for O(2) through an hexacoordinate heme iron because of a very low dissociation constant. In Physcomitrium patens (Spreading-leaved earth moss), this protein is Anaerobic nitrite reductase GLB0.